Here is a 158-residue protein sequence, read N- to C-terminus: N-acetylgalactosamine-specific phosphotransferase enzyme IIB component 1 (158 aa).

The PTS EIIB type-4 domain occupies 1 to 158 (MTSPNILLTR…PGDQKEQIPD (158 aa)). The Pros-phosphohistidine intermediate role is filled by His17.

The protein resides in the cytoplasm. The phosphoenolpyruvate-dependent sugar phosphotransferase system (sugar PTS), a major carbohydrate active -transport system, catalyzes the phosphorylation of incoming sugar substrates concomitantly with their translocation across the cell membrane. This system is involved in N-acetylgalactosamine transport. The polypeptide is N-acetylgalactosamine-specific phosphotransferase enzyme IIB component 1 (agaB) (Escherichia coli (strain K12)).